A 205-amino-acid polypeptide reads, in one-letter code: Protein Rcp (205 aa).

Belongs to the NAD(P)-dependent epimerase/dehydratase family.

The polypeptide is Protein Rcp (rcp) (Vibrio cholerae serotype O1 (strain ATCC 39315 / El Tor Inaba N16961)).